Here is a 323-residue protein sequence, read N- to C-terminus: Quinolinate synthase (323 aa).

H39 and S56 together coordinate iminosuccinate. C101 lines the [4Fe-4S] cluster pocket. Iminosuccinate contacts are provided by residues 127–129 (YIN) and S144. [4Fe-4S] cluster is bound at residue C187. Iminosuccinate contacts are provided by residues 213–215 (HPE) and T230. C280 contacts [4Fe-4S] cluster.

Belongs to the quinolinate synthase family. Type 2 subfamily. It depends on [4Fe-4S] cluster as a cofactor.

It localises to the cytoplasm. It catalyses the reaction iminosuccinate + dihydroxyacetone phosphate = quinolinate + phosphate + 2 H2O + H(+). Its pathway is cofactor biosynthesis; NAD(+) biosynthesis; quinolinate from iminoaspartate: step 1/1. Catalyzes the condensation of iminoaspartate with dihydroxyacetone phosphate to form quinolinate. The chain is Quinolinate synthase from Chlorobium phaeobacteroides (strain DSM 266 / SMG 266 / 2430).